A 342-amino-acid polypeptide reads, in one-letter code: MKYLVLALCTYLCSQSGADENAAQGIPLEAQRLTGEPLVAYLRRSQNLFEVNSDPTPDFEQKIMSIKYKHQKLNLMVKEDPDPEVDIPPSYDPRDVWKNCTTFYIRDQANCGSCWAVSTAAAISDRICIASKAEKQVNISATDIMTCCRPQCGDGCEGGWPIEAWKYFIYDGVVSGGEYLTKDVCRPYPIHPCGHHGNDTYYGECRGTAPTPPCKRKCRPGVRKMYRIDKRYGKDAYIVKQSVKAIQSEILKNGPVVASFAVYEDFRHYKSGIYKHTAGELRGYHAVKMIGWGNENNTDFWLIANSWHNDWGEKGYFRIVRGSNDCGIEGTIAAGIVDTESL.

An N-terminal signal peptide occupies residues 1–18 (MKYLVLALCTYLCSQSGA). Positions 19–86 (DENAAQGIPL…VKEDPDPEVD (68 aa)) are cleaved as a propeptide — activation peptide. Asn-99 carries N-linked (GlcNAc...) asparagine glycosylation. 6 disulfide bridges follow: Cys-100-Cys-128, Cys-111-Cys-156, Cys-147-Cys-214, Cys-148-Cys-152, Cys-185-Cys-218, and Cys-193-Cys-205. The active site involves Cys-114. The N-linked (GlcNAc...) asparagine glycan is linked to Asn-138. N-linked (GlcNAc...) asparagine glycosylation occurs at Asn-198. His-285 is an active-site residue. The N-linked (GlcNAc...) asparagine glycan is linked to Asn-296. Asn-305 is a catalytic residue.

Belongs to the peptidase C1 family.

In terms of biological role, expression of the protease correlates with blood-feeding and suggests a role for the protease in blood digestion. The protein is Cathepsin B-like cysteine proteinase 2 (AC-2) of Haemonchus contortus (Barber pole worm).